Consider the following 144-residue polypeptide: Transmembrane protein 170A (144 aa).

The Lumenal segment spans residues 1–50 (MEREGSGGSGGSAGLLQQILSLKVVPRVGNGTLCPNSTSLCSFPEMWYGV). Residues Asn30 and Asn36 are each glycosylated (N-linked (GlcNAc...) asparagine). Residues 51–71 (FLWALVSSLFFHVPAGLLALF) traverse the membrane as a helical segment. At 72–85 (TLRHHKYGRFMSVS) the chain is on the cytoplasmic side. The helical transmembrane segment at 86 to 106 (ILLMGIVGPITAGILTSAAIA) threads the bilayer. At 107–116 (GVYRAAGKEM) the chain is on the lumenal side. A helical membrane pass occupies residues 117–137 (IPFEALTLGTGQTFCVLVVSF). Residues 138–144 (LRILATL) are Cytoplasmic-facing.

Belongs to the TMEM170 family. As to quaternary structure, interacts with RTN4.

The protein resides in the endoplasmic reticulum membrane. It localises to the nucleus envelope. Its function is as follows. Acts as a regulator of endoplasmic reticulum (ER) and nuclear envelope (NE) morphogenesis. Affects the ratio between tubular ER and ER sheets by promoting sheet formation at the expense of tubules. Influences NE expansion, nuclear pore complex formation and proper localization of inner nuclear membrane proteins. The polypeptide is Transmembrane protein 170A (TMEM170A) (Homo sapiens (Human)).